A 22-amino-acid chain; its full sequence is Cysteine protease inhibitor 4 (22 aa).

This sequence belongs to the protease inhibitor I3 (leguminous Kunitz-type inhibitor) family. Tubers.

Its subcellular location is the vacuole. Inhibitor of papain (cysteine protease). Does not inhibit trypsin, chymotrypsin nor elastase (serine proteases). May protect the plant by inhibiting proteases of invading organisms. This is Cysteine protease inhibitor 4 from Solanum tuberosum (Potato).